Here is a 2053-residue protein sequence, read N- to C-terminus: Cell adhesion molecule DSCAML1 (2053 aa).

Positions 1-18 (MWLVTFLLLLDSLHKARP) are cleaved as a signal peptide. 9 Ig-like C2-type domains span residues 19 to 119 (EDVG…NIRV), 115 to 217 (PNIR…ARLS), 226 to 306 (PTIL…AEAT), 314 to 402 (PLHV…AIIA), 408 to 501 (PRIV…ARIN), 506 to 586 (PSIR…LSIS), 596 to 685 (PPLI…RQLI), 690 to 784 (PRFV…MFLT), and 788 to 885 (PAMI…LTVQ). Residues 19–1591 (EDVGTSLYFV…AQGEGDDVKK (1573 aa)) are Extracellular-facing. N-linked (GlcNAc...) asparagine glycans are attached at residues Asn-29 and Asn-79. Cystine bridges form between Cys-47–Cys-103, Cys-146–Cys-198, Cys-247–Cys-294, Cys-336–Cys-386, and Cys-429–Cys-485. Residues Asn-368, Asn-471, Asn-513, Asn-556, Asn-666, Asn-710, Asn-749, Asn-796, and Asn-809 are each glycosylated (N-linked (GlcNAc...) asparagine). Cystine bridges form between Cys-526–Cys-575 and Cys-617–Cys-669. Cysteines 711 and 767 form a disulfide. Cys-810 and Cys-867 form a disulfide bridge. 4 Fibronectin type-III domains span residues 887–984 (PPDP…TEEA), 989–1088 (PPMD…TLED), 1093–1189 (PPEN…TKED), and 1193–1288 (PPAG…AGKA). N-linked (GlcNAc...) asparagine glycans are attached at residues Asn-926, Asn-1082, Asn-1144, Asn-1162, Asn-1275, and Asn-1345. Residues 1278–1377 (EKVTIEPAGK…TGGFDTIIVN (100 aa)) form the Ig-like C2-type 10 domain. Cys-1311 and Cys-1363 are disulfide-bonded. Fibronectin type-III domains follow at residues 1383–1477 (PPDQ…THGR) and 1478–1578 (EPSF…TIPP). 3 N-linked (GlcNAc...) asparagine glycosylation sites follow: Asn-1492, Asn-1531, and Asn-1561. Residues 1592 to 1612 (LFTIGCPVILATLGVALLFIV) traverse the membrane as a helical segment. At 1613-2053 (RKKRKEKRLK…GAYSKSYTLV (441 aa)) the chain is on the cytoplasmic side. Disordered stretches follow at residues 1715–1741 (PLIDMSDIRPGTNPVSRKNVKSAHSTR), 1773–1803 (HGVTVTESDSYSASLSQDTDKGRNSMVSTES), 1840–1862 (SSDQMTTGTNENADSMTSMSTPS), and 1974–2053 (LAMP…YTLV). Over residues 1732-1741 (KNVKSAHSTR) the composition is skewed to basic residues. Residues 1773-1789 (HGVTVTESDSYSASLSQ) show a composition bias toward polar residues. Residues 1977–2009 (PAPPAGTAPPAPGPTPAEPPTAPSAAPPAPSTE) are compositionally biased toward pro residues. A compositionally biased stretch (polar residues) spans 2029–2041 (EMSTSGVGRSQKQ).

As to quaternary structure, homodimer; mediates homophilic interactions to promote cell adhesion. Detected in heart, liver, pancreas, skeletal muscle, kidney and in brain, in particular in the amygdala, caudate nucleus, corpus callosum, hippocampus, substantia nigra, thalamus and subthalamus.

Its subcellular location is the cell membrane. It localises to the synapse. Its function is as follows. Cell adhesion molecule that plays a role in neuronal self-avoidance. Promotes repulsion between specific neuronal processes of either the same cell or the same subtype of cells. Promotes both isoneuronal self-avoidance for creating an orderly neurite arborization in retinal rod bipolar cells and heteroneuronal self-avoidance to maintain mosaic spacing between AII amacrine cells. Adhesion molecule that promotes lamina-specific synaptic connections in the retina: expressed in specific subsets of interneurons and retinal ganglion cells (RGCs) and promotes synaptic connectivity via homophilic interactions. The chain is Cell adhesion molecule DSCAML1 (DSCAML1) from Homo sapiens (Human).